A 331-amino-acid polypeptide reads, in one-letter code: Peroxidase 69 (331 aa).

Positions 1 to 23 (MGRGYNLLFVLVTFLVLVAAVTA) are cleaved as a signal peptide. 4 disulfides stabilise this stretch: C46–C122, C79–C84, C128–C327, and C205–C237. Catalysis depends on H77, which acts as the Proton acceptor. D78, V81, G83, D85, and S87 together coordinate Ca(2+). N-linked (GlcNAc...) asparagine glycosylation occurs at N93. Substrate is bound at residue P168. Heme b is bound at residue H198. T199 contacts Ca(2+). N216 carries N-linked (GlcNAc...) asparagine glycosylation. Residues D248, S251, and D256 each contribute to the Ca(2+) site.

The protein belongs to the peroxidase family. Classical plant (class III) peroxidase subfamily. Requires heme b as cofactor. Ca(2+) is required as a cofactor. As to expression, mainly expressed in roots and slightly in leaves.

It is found in the secreted. It catalyses the reaction 2 a phenolic donor + H2O2 = 2 a phenolic radical donor + 2 H2O. In terms of biological role, removal of H(2)O(2), oxidation of toxic reductants, biosynthesis and degradation of lignin, suberization, auxin catabolism, response to environmental stresses such as wounding, pathogen attack and oxidative stress. These functions might be dependent on each isozyme/isoform in each plant tissue. The protein is Peroxidase 69 (PER69) of Arabidopsis thaliana (Mouse-ear cress).